Here is a 106-residue protein sequence, read N- to C-terminus: Large ribosomal subunit protein eL30 (106 aa).

The protein belongs to the eukaryotic ribosomal protein eL30 family.

The chain is Large ribosomal subunit protein eL30 from Methanococcus maripaludis (strain C7 / ATCC BAA-1331).